Here is a 232-residue protein sequence, read N- to C-terminus: Orotate phosphoribosyltransferase (232 aa).

5-phospho-alpha-D-ribose 1-diphosphate contacts are provided by residues Arg107, Lys108, Lys111, and 133–141 (EDLTTDGGS). Residue Thr137 coordinates orotate.

Belongs to the purine/pyrimidine phosphoribosyltransferase family. PyrE subfamily. Homodimer. It depends on Mg(2+) as a cofactor.

The enzyme catalyses orotidine 5'-phosphate + diphosphate = orotate + 5-phospho-alpha-D-ribose 1-diphosphate. Its pathway is pyrimidine metabolism; UMP biosynthesis via de novo pathway; UMP from orotate: step 1/2. Its function is as follows. Catalyzes the transfer of a ribosyl phosphate group from 5-phosphoribose 1-diphosphate to orotate, leading to the formation of orotidine monophosphate (OMP). The polypeptide is Orotate phosphoribosyltransferase (Cereibacter sphaeroides (strain ATCC 17025 / ATH 2.4.3) (Rhodobacter sphaeroides)).